A 190-amino-acid chain; its full sequence is MSQLQLLRAQDYPRMPWKNGGGFTEEITRDSGEGLDGFGWRLSIADIEESGGFSTFAGYQRIITVLQGDGMRLLVDGQPSRPLLPFDAFAFSGESQVSCKLLGGAIRDFNLIYAPQRYRARLQWFDGTSRLYSSASTVLLFAASSHVEVSMAGREVQRLGLYDCLRLEGNDELLGLEVQGRFCLIELISR.

The protein to E.coli YdjR.

This is an uncharacterized protein from Pseudomonas putida (Arthrobacter siderocapsulatus).